Consider the following 250-residue polypeptide: Type-1Ab cytolytic delta-endotoxin (250 aa).

It belongs to the cyt1/cyt2 endotoxin family. Post-translationally, active after proteolytic processing.

Its function is as follows. Kills the larvae of dipteran insects by making pores in the epithelial cell membrane of the insect midgut. The chain is Type-1Ab cytolytic delta-endotoxin (cyt1Ab1) from Bacillus thuringiensis subsp. medellin.